A 386-amino-acid polypeptide reads, in one-letter code: HORMA domain-containing protein 1 (386 aa).

The HORMA domain occupies 24-224 (TQSLILVKRL…TPFHVLKVKV (201 aa)). Disordered regions lie at residues 237–274 (SIFKKQASKQPQTDEEKPDLSINDDLAQDNNGDRKRDD) and 289–386 (EDGN…TPLN). The span at 289 to 313 (EDGNLQSDDSQNSALADSQEKTSQA) shows a compositional bias: polar residues. Basic and acidic residues predominate over residues 329–343 (QKPDLELKNQKESAR).

The protein resides in the nucleus. Its subcellular location is the chromosome. Its function is as follows. Plays a key role in meiotic progression by ensuring that sufficient numbers of processed DNA double-strand breaks (DSBs) are available for successful homology search, promoting synaptonemal-complex formation independently and playing key role in the male mid-pachytene checkpoint and the female meiotic prophase checkpoint. This chain is HORMA domain-containing protein 1 (hormad1), found in Xenopus laevis (African clawed frog).